A 178-amino-acid polypeptide reads, in one-letter code: Gamma-crystallin S (178 aa).

The residue at position 2 (Ser-2) is an N-acetylserine. Residues 2–5 (SKAG) are N-terminal arm. Beta/gamma crystallin 'Greek key' domains follow at residues 6 to 44 (TKIT…RVEG) and 45 to 87 (GTWA…RAVH). The connecting peptide stretch occupies residues 88-93 (LSSGGQ). Beta/gamma crystallin 'Greek key' domains follow at residues 94-134 (YKLQ…KVLE) and 135-177 (GAWI…RRIV).

It belongs to the beta/gamma-crystallin family. Monomer.

In terms of biological role, crystallins are the dominant structural components of the vertebrate eye lens. The polypeptide is Gamma-crystallin S (CRYGS) (Bos taurus (Bovine)).